We begin with the raw amino-acid sequence, 411 residues long: Na(+)-translocating NADH-quinone reductase subunit F (411 aa).

The helical transmembrane segment at 6-26 (AIGGVAMFTLIIMGLVAIILA) threads the bilayer. The 2Fe-2S ferredoxin-type domain maps to 35–129 (GDVTIHINDN…DMKIEIDPEF (95 aa)). Cys-72, Cys-78, Cys-81, and Cys-113 together coordinate [2Fe-2S] cluster. The FAD-binding FR-type domain maps to 132–273 (VQKWECEVIS…SGPYGEFFAK (142 aa)).

This sequence belongs to the NqrF family. As to quaternary structure, composed of six subunits; NqrA, NqrB, NqrC, NqrD, NqrE and NqrF. It depends on [2Fe-2S] cluster as a cofactor. The cofactor is FAD.

The protein localises to the cell inner membrane. The enzyme catalyses a ubiquinone + n Na(+)(in) + NADH + H(+) = a ubiquinol + n Na(+)(out) + NAD(+). NQR complex catalyzes the reduction of ubiquinone-1 to ubiquinol by two successive reactions, coupled with the transport of Na(+) ions from the cytoplasm to the periplasm. The first step is catalyzed by NqrF, which accepts electrons from NADH and reduces ubiquinone-1 to ubisemiquinone by a one-electron transfer pathway. This chain is Na(+)-translocating NADH-quinone reductase subunit F, found in Psychrobacter cryohalolentis (strain ATCC BAA-1226 / DSM 17306 / VKM B-2378 / K5).